Reading from the N-terminus, the 198-residue chain is Pre-histone-like nucleoprotein (198 aa).

S2 carries the N-acetylserine; by host modification. The propeptide occupies 2–24 (SILISPSNNTGWGLRFPSKMFGG). The tract at residues 24-55 (GAKKRSDQHPVRVRGHYRAPWGAHKRGRTGRT) is disordered. N6-acetyllysine; by host is present on residues K27 and K48. The span at 34–52 (VRVRGHYRAPWGAHKRGRT) shows a compositional bias: basic residues. 2 positions are modified to phosphothreonine; by host: T55 and T74. Phosphoserine; by host occurs at positions 183 and 185. The Nuclear localization signal signature appears at 188–198 (RVPVRTRPPRN).

It belongs to the adenoviridae histone-like nucleoprotein family. Interacts with the core-capsid bridging protein; this interaction bridges the virus core to the capsid. Interacts with host NPM1; this interaction might play a role in placing the pre-histone-like nucleoprotein on the viral DNA or regulating viral gene expression. Interacts with host HMGB1; this interaction inhibits host immune response. Cleaved near the N-terminus by the viral protease during virion maturation to form the mature protein.

The protein localises to the virion. Its subcellular location is the host nucleus. The protein resides in the host nucleolus. Its function is as follows. Plays a role in the inhibition of host immune response within the nucleus. Interacts with cellular nucleosomes and immobilizes the host immune danger signal HMGB1 on chromatin. In turn, prevents HMGB1 release out of the cell and thus decreases inflammation. Also plays a role in the wrapping and condensation of the viral DNA. May also promote viral genome import into the nucleus. The chain is Pre-histone-like nucleoprotein from Human adenovirus C serotype 2 (HAdV-2).